A 65-amino-acid chain; its full sequence is Putative per-hexamer repeat protein 2 (65 aa).

This Mus musculus (Mouse) protein is Putative per-hexamer repeat protein 2 (Phxr2).